A 345-amino-acid polypeptide reads, in one-letter code: Phosphoribosylformylglycinamidine cyclo-ligase (345 aa).

It belongs to the AIR synthase family.

Its subcellular location is the cytoplasm. It catalyses the reaction 2-formamido-N(1)-(5-O-phospho-beta-D-ribosyl)acetamidine + ATP = 5-amino-1-(5-phospho-beta-D-ribosyl)imidazole + ADP + phosphate + H(+). The protein operates within purine metabolism; IMP biosynthesis via de novo pathway; 5-amino-1-(5-phospho-D-ribosyl)imidazole from N(2)-formyl-N(1)-(5-phospho-D-ribosyl)glycinamide: step 2/2. The protein is Phosphoribosylformylglycinamidine cyclo-ligase of Mannheimia succiniciproducens (strain KCTC 0769BP / MBEL55E).